The sequence spans 330 residues: PDZ and LIM domain protein 4 (330 aa).

In terms of domain architecture, PDZ spans 1–84 (MTHSVTLRGP…HLTLSVSRPE (84 aa)). Disordered regions lie at residues 104–153 (DPES…SNEA) and 219–242 (EAGE…ASKL). Phosphoserine occurs at positions 107, 111, 115, 118, 119, 124, and 134. Positions 108 to 122 (QDCSPATSRRSSVSG) are enriched in polar residues. The LIM zinc-binding domain maps to 255–305 (CTRCGHGIVGTIVKARDKLYHPECFMCSDCGLNLKQRGYFFLDERLYCENH).

In terms of assembly, homodimer. Interacts (via C-terminus only or via combined C-terminus and LIM domain, but not LIM domain only) with PTPN13 (via the second or fourth PDZ domains). Found in a complex with PTPN13 and TRIP6. Interacts (via PDZ domain) with ACTN1 and ACTN2 (via C-terminal SDL residues). Interacts (via PDZ domain) with TRIP6 (via the second LIM domain or via the third LIM domain plus C-terminus). Interacts (via LIM domain) with GRIA1 (via C-terminus); this interaction as well as the interaction with alpha-actinin is required for their colocalization in early endosomes. Interacts with PDLIM1. Forms (via LIM domain) a heterodimer with PDLIM3. Interacts directly with SRC (via kinase domain and to a lesser extent the SH2 domain). Post-translationally, phosphorylated on tyrosine residue(s). Can be dephosphorylated by PTPN13. In terms of tissue distribution, expressed in several non-muscle tissues including lung, brain, ovary and uterus, and especially in epithelial cells at 14 dpc. In the uterus, high expression in the glandular epithelium, but absent in the simple columnar epithelium lining the uterus cavity.

It is found in the cytoplasm. The protein localises to the cytoskeleton. It localises to the cell projection. Its subcellular location is the dendritic spine. The protein resides in the early endosome membrane. It is found in the recycling endosome membrane. The protein localises to the nucleus. It localises to the perinuclear region. Its subcellular location is the lamellipodium. The protein resides in the synapse. It is found in the synaptosome. Its function is as follows. Suppresses SRC activation by recognizing and binding to active SRC and facilitating PTPN13-mediated dephosphorylation of SRC 'Tyr-419' leading to its inactivation. Inactivated SRC dissociates from this protein allowing the initiation of a new SRC inactivation cycle. Involved in reorganization of the actin cytoskeleton. In nonmuscle cells, binds to ACTN1 (alpha-actinin-1), increases the affinity of ACTN1 to F-actin (filamentous actin), and promotes formation of actin stress fibers. Involved in regulation of the synaptic AMPA receptor transport in dendritic spines of hippocampal pyramidal neurons directing the receptors toward an insertion at the postsynaptic membrane. Links endosomal surface-internalized GRIA1-containing AMPA receptors to the alpha-actinin/actin cytoskeleton. Increases AMPA receptor-mediated excitatory postsynaptic currents in neurons. This chain is PDZ and LIM domain protein 4 (Pdlim4), found in Mus musculus (Mouse).